The following is a 103-amino-acid chain: Integration host factor subunit alpha (103 aa).

Residues 55 to 74 (CREKPQRPGRNPKTGEEMPI) are disordered.

The protein belongs to the bacterial histone-like protein family. In terms of assembly, heterodimer of an alpha and a beta chain.

This protein is one of the two subunits of integration host factor, a specific DNA-binding protein that functions in genetic recombination as well as in transcriptional and translational control. The sequence is that of Integration host factor subunit alpha from Thiobacillus denitrificans (strain ATCC 25259 / T1).